The following is a 311-amino-acid chain: Aspartate carbamoyltransferase catalytic subunit (311 aa).

2 residues coordinate carbamoyl phosphate: Arg-58 and Thr-59. Lys-86 contacts L-aspartate. The carbamoyl phosphate site is built by Arg-108, His-136, and Gln-139. Arg-169 and Arg-224 together coordinate L-aspartate. Residues Gly-265 and Pro-266 each coordinate carbamoyl phosphate.

This sequence belongs to the aspartate/ornithine carbamoyltransferase superfamily. ATCase family. As to quaternary structure, heterododecamer (2C3:3R2) of six catalytic PyrB chains organized as two trimers (C3), and six regulatory PyrI chains organized as three dimers (R2).

It carries out the reaction carbamoyl phosphate + L-aspartate = N-carbamoyl-L-aspartate + phosphate + H(+). It participates in pyrimidine metabolism; UMP biosynthesis via de novo pathway; (S)-dihydroorotate from bicarbonate: step 2/3. Functionally, catalyzes the condensation of carbamoyl phosphate and aspartate to form carbamoyl aspartate and inorganic phosphate, the committed step in the de novo pyrimidine nucleotide biosynthesis pathway. The chain is Aspartate carbamoyltransferase catalytic subunit from Geotalea uraniireducens (strain Rf4) (Geobacter uraniireducens).